A 233-amino-acid chain; its full sequence is MAKLTKRARLVRDKVEATKEYDFNEAVALLKELATAKFAESVDVAVNLGIDARKSDQNVRGATVLPNGTGKEVRVAVFTQGANAEAAKEAGADIVGMEDLAEQVKKGEMNFDVVVASPDAMRVVGMLGQILGPRGLMPNPKTGTVTPDVATAVKNAKAGQVRYRNDKNGIIHASIGKIAFESNQIEENLAALIEAVKKAKPSSAKGVYIKKISLSTTMGAGITIDQASLTAAS.

Belongs to the universal ribosomal protein uL1 family. In terms of assembly, part of the 50S ribosomal subunit.

Its function is as follows. Binds directly to 23S rRNA. The L1 stalk is quite mobile in the ribosome, and is involved in E site tRNA release. Protein L1 is also a translational repressor protein, it controls the translation of the L11 operon by binding to its mRNA. This is Large ribosomal subunit protein uL1 from Pseudoalteromonas atlantica (strain T6c / ATCC BAA-1087).